Here is a 445-residue protein sequence, read N- to C-terminus: Phosphoglucosamine mutase (445 aa).

The active-site Phosphoserine intermediate is S102. 4 residues coordinate Mg(2+): S102, D241, D243, and D245. Residue S102 is modified to Phosphoserine.

This sequence belongs to the phosphohexose mutase family. Requires Mg(2+) as cofactor. Activated by phosphorylation.

The catalysed reaction is alpha-D-glucosamine 1-phosphate = D-glucosamine 6-phosphate. In terms of biological role, catalyzes the conversion of glucosamine-6-phosphate to glucosamine-1-phosphate. This chain is Phosphoglucosamine mutase, found in Enterobacter sp. (strain 638).